A 466-amino-acid chain; its full sequence is uncharacterized protein (466 aa).

Residues Asn4–Leu199 enclose the C2 NT-type domain. Disordered regions lie at residues Ala262–Ile298, Leu374–Met393, and Glu400–Arg452. Residues Thr266–Ile298 are compositionally biased toward polar residues. A phosphoserine mark is found at Ser433 and Ser439.

This sequence to S.pombe SpCC1494.08c.

This is an uncharacterized protein from Saccharomyces cerevisiae (strain ATCC 204508 / S288c) (Baker's yeast).